We begin with the raw amino-acid sequence, 123 residues long: Transmembrane protein 254 (123 aa).

The next 3 helical transmembrane spans lie at L15–P35, N63–C83, and L95–Y115.

The protein resides in the membrane. This chain is Transmembrane protein 254 (Tmem254), found in Rattus norvegicus (Rat).